The primary structure comprises 295 residues: Phosphatidylglycerol--prolipoprotein diacylglyceryl transferase (295 aa).

The next 7 helical transmembrane spans lie at I17–G37, L57–Y77, V92–W112, F127–A147, Q196–A216, Y222–V242, and W255–V275. R140 contacts a 1,2-diacyl-sn-glycero-3-phospho-(1'-sn-glycerol).

This sequence belongs to the Lgt family.

It localises to the cell inner membrane. It carries out the reaction L-cysteinyl-[prolipoprotein] + a 1,2-diacyl-sn-glycero-3-phospho-(1'-sn-glycerol) = an S-1,2-diacyl-sn-glyceryl-L-cysteinyl-[prolipoprotein] + sn-glycerol 1-phosphate + H(+). It functions in the pathway protein modification; lipoprotein biosynthesis (diacylglyceryl transfer). In terms of biological role, catalyzes the transfer of the diacylglyceryl group from phosphatidylglycerol to the sulfhydryl group of the N-terminal cysteine of a prolipoprotein, the first step in the formation of mature lipoproteins. The sequence is that of Phosphatidylglycerol--prolipoprotein diacylglyceryl transferase from Stenotrophomonas maltophilia (strain R551-3).